Here is an 807-residue protein sequence, read N- to C-terminus: Spondin-1 (807 aa).

A signal peptide spans 1 to 28; the sequence is MRLSPVSLRLSRGPALLALALPLAAALA. Residues 29 to 194 form the Reelin domain; the sequence is FSDETLDKVT…DPTLDGVTDR (166 aa). 17 cysteine pairs are disulfide-bonded: Cys44-Cys128, Cys156-Cys182, Cys199-Cys336, Cys200-Cys340, Cys202-Cys415, Cys443-Cys480, Cys454-Cys489, Cys459-Cys494, Cys502-Cys538, Cys513-Cys517, Cys548-Cys554, Cys559-Cys595, Cys570-Cys574, Cys605-Cys610, Cys615-Cys650, Cys626-Cys630, and Cys660-Cys665. The 194-residue stretch at 195–388 folds into the Spondin domain; it reads PILDCCACGT…LTSLDHPQSP (194 aa). Asn214 carries N-linked (GlcNAc...) asparagine glycosylation. Positions 325, 354, and 358 each coordinate Ca(2+). TSP type-1 domains are found at residues 442–495, 501–555, 558–611, 614–666, and 668–721; these read TCIY…PGCS, TCTM…EECS, SCLV…PECH, PCLL…PECP, and DCEL…RKCL. A glycan (N-linked (GlcNAc...) asparagine) is linked at Asn681. The span at 732–746 shows a compositional bias: basic and acidic residues; sequence REARESRRSEQLREE. The interval 732–752 is disordered; the sequence is REARESRRSEQLREESDGEQF. The region spanning 754 to 806 is the TSP type-1 6 domain; that stretch reads GCRMRPWTAWSECTKLCGGGIQERYMTVKKRFKSSQFTSCKDKKEIRACNVHP.

In terms of assembly, binds to the central extracellular domain of APP and inhibits beta-secretase cleavage of APP.

The protein resides in the secreted. The protein localises to the extracellular space. It is found in the extracellular matrix. Cell adhesion protein that promotes the attachment of spinal cord and sensory neuron cells and the outgrowth of neurites in vitro. May contribute to the growth and guidance of axons in both the spinal cord and the PNS. This is Spondin-1 (Spon1) from Mus musculus (Mouse).